The chain runs to 240 residues: Transcription factor bHLH47 (240 aa).

The span at 1-13 (MVSKTPSTSSDEA) shows a compositional bias: polar residues. The disordered stretch occupies residues 1–26 (MVSKTPSTSSDEANATADERCRKGKV). The 51-residue stretch at 27–77 (PKRINKAVRERLKREHLNELFIELADTLELNQQNSGKASILCEATRFLKDV) folds into the bHLH domain. Residues 98-131 (VTTEKNELKEETSVLETEISKLQNEIEARANQSK) are a coiled coil. Polar residues predominate over residues 128 to 138 (NQSKPDLNTSP). Positions 128–153 (NQSKPDLNTSPAPEYHHHHYQQQHPE) are disordered.

In terms of assembly, homodimer. Forms heterodimer with PYEL proteins bHLH115, bHLH104 and ILR3. As to expression, expressed constitutively in roots, leaves, stems, and flowers.

The protein resides in the nucleus. This chain is Transcription factor bHLH47 (BHLH47), found in Arabidopsis thaliana (Mouse-ear cress).